The chain runs to 201 residues: NADH-quinone oxidoreductase subunit C (201 aa).

This sequence belongs to the complex I 30 kDa subunit family. In terms of assembly, NDH-1 is composed of 14 different subunits. Subunits NuoB, C, D, E, F, and G constitute the peripheral sector of the complex.

The protein localises to the cell inner membrane. It carries out the reaction a quinone + NADH + 5 H(+)(in) = a quinol + NAD(+) + 4 H(+)(out). Functionally, NDH-1 shuttles electrons from NADH, via FMN and iron-sulfur (Fe-S) centers, to quinones in the respiratory chain. The immediate electron acceptor for the enzyme in this species is believed to be ubiquinone. Couples the redox reaction to proton translocation (for every two electrons transferred, four hydrogen ions are translocated across the cytoplasmic membrane), and thus conserves the redox energy in a proton gradient. The protein is NADH-quinone oxidoreductase subunit C of Dechloromonas aromatica (strain RCB).